Consider the following 196-residue polypeptide: Nodulation protein A (196 aa).

Belongs to the NodA family.

It is found in the cytoplasm. In terms of biological role, N-acyltransferase required for nodulation. Acts in the production of a small, heat-stable compound (Nod) that stimulates mitosis in various plant protoplasts. The sequence is that of Nodulation protein A from Mesorhizobium plurifarium.